Reading from the N-terminus, the 474-residue chain is Tocopherol cyclase, chloroplastic (474 aa).

The N-terminal 65 residues, Met-1–Arg-65, are a transit peptide targeting the chloroplast.

Present in all green tissues, both in bundle sheath and in mesophyll cells.

The protein resides in the plastid. It localises to the chloroplast. The catalysed reaction is gamma-tocopherol = 2,3-dimethyl-6-phytylbenzene-1,4-diol. The protein operates within cofactor biosynthesis; tocopherol biosynthesis. In terms of biological role, involved in the synthesis of tocopherols (vitamin E), which presumably protect photosynthetic complexes from oxidative stress. Catalyzes the conversion of 2,3-dimethyl-5-phytyl-1,4-hydroquinone (DMPQ) to gamma-tocopherol. The protein is Tocopherol cyclase, chloroplastic of Zea mays (Maize).